The following is a 174-amino-acid chain: Crossover junction endodeoxyribonuclease RuvC (174 aa).

Residues Asp8, Glu67, and Asp139 contribute to the active site. Mg(2+) is bound by residues Asp8, Glu67, and Asp139.

This sequence belongs to the RuvC family. In terms of assembly, homodimer which binds Holliday junction (HJ) DNA. The HJ becomes 2-fold symmetrical on binding to RuvC with unstacked arms; it has a different conformation from HJ DNA in complex with RuvA. In the full resolvosome a probable DNA-RuvA(4)-RuvB(12)-RuvC(2) complex forms which resolves the HJ. It depends on Mg(2+) as a cofactor.

The protein localises to the cytoplasm. The enzyme catalyses Endonucleolytic cleavage at a junction such as a reciprocal single-stranded crossover between two homologous DNA duplexes (Holliday junction).. The RuvA-RuvB-RuvC complex processes Holliday junction (HJ) DNA during genetic recombination and DNA repair. Endonuclease that resolves HJ intermediates. Cleaves cruciform DNA by making single-stranded nicks across the HJ at symmetrical positions within the homologous arms, yielding a 5'-phosphate and a 3'-hydroxyl group; requires a central core of homology in the junction. The consensus cleavage sequence is 5'-(A/T)TT(C/G)-3'. Cleavage occurs on the 3'-side of the TT dinucleotide at the point of strand exchange. HJ branch migration catalyzed by RuvA-RuvB allows RuvC to scan DNA until it finds its consensus sequence, where it cleaves and resolves the cruciform DNA. This Pseudomonas paraeruginosa (strain DSM 24068 / PA7) (Pseudomonas aeruginosa (strain PA7)) protein is Crossover junction endodeoxyribonuclease RuvC.